The sequence spans 965 residues: UvrABC system protein A (965 aa).

ATP is bound at residue 32 to 39 (GLSGSGKS). The C4-type zinc finger occupies 254 to 281 (CPVCDYSLPELEPRLFSFNAPMGACPAC). ABC transporter domains follow at residues 311-588 (WDRR…PRSL) and 608-937 (PNAT…HFLA). An ATP-binding site is contributed by 641–648 (GVSGSGKS). A C4-type zinc finger spans residues 740-766 (CEACEGDGLIKVEMHFLPDVYVPCDIC).

This sequence belongs to the ABC transporter superfamily. UvrA family. Forms a heterotetramer with UvrB during the search for lesions.

It localises to the cytoplasm. In terms of biological role, the UvrABC repair system catalyzes the recognition and processing of DNA lesions. UvrA is an ATPase and a DNA-binding protein. A damage recognition complex composed of 2 UvrA and 2 UvrB subunits scans DNA for abnormalities. When the presence of a lesion has been verified by UvrB, the UvrA molecules dissociate. The sequence is that of UvrABC system protein A from Xylella fastidiosa (strain Temecula1 / ATCC 700964).